The chain runs to 241 residues: MKFVVDTHTHTIASGHAYSTVQEMAKEASANGIEMFAITDHGPAMKGAPYLYHFGNLRVIPEVLYGVRILKGVEANIIDYSGGLDMPEEYLRRLDFVLASFHDICIEPKTLEEHTEAVINVLKNPYVDAIAHPGNPQFPLDIEKVVRAAKENGKFIELNNHSFVTRKGSEENCKEFARECKKQGVRIVCGSDSHISFEVGRFDRVYKLLEEVDMPCELVMNTSVEKFDEYIKRKKERIRRK.

Residues H8, H10, H16, H41, E74, H102, H132, D192, and H194 each coordinate Zn(2+).

This sequence belongs to the PHP family. It depends on Zn(2+) as a cofactor.

The chain is Probable phosphatase Cthe_0111 from Acetivibrio thermocellus (strain ATCC 27405 / DSM 1237 / JCM 9322 / NBRC 103400 / NCIMB 10682 / NRRL B-4536 / VPI 7372) (Clostridium thermocellum).